Here is a 341-residue protein sequence, read N- to C-terminus: Phosphate acyltransferase (341 aa).

Belongs to the PlsX family. In terms of assembly, homodimer. Probably interacts with PlsY.

It localises to the cytoplasm. It carries out the reaction a fatty acyl-[ACP] + phosphate = an acyl phosphate + holo-[ACP]. It functions in the pathway lipid metabolism; phospholipid metabolism. Functionally, catalyzes the reversible formation of acyl-phosphate (acyl-PO(4)) from acyl-[acyl-carrier-protein] (acyl-ACP). This enzyme utilizes acyl-ACP as fatty acyl donor, but not acyl-CoA. In Lacticaseibacillus casei (strain BL23) (Lactobacillus casei), this protein is Phosphate acyltransferase.